The primary structure comprises 348 residues: Rhodopsin (348 aa).

Topologically, residues 1–33 are extracellular; that stretch reads TEGPYFYIPMVNTTGIVRSPYEYPQYYLVNPAA. Residue asparagine 12 is glycosylated (N-linked (GlcNAc...) asparagine). Residues 34 to 58 form a helical membrane-spanning segment; the sequence is YAMLGAYMFFLIIVGFPVNFMTLYV. Residues 59–70 lie on the Cytoplasmic side of the membrane; it reads TLEHKKLRTPLN. Residues 71 to 93 form a helical membrane-spanning segment; that stretch reads YILLNLAVADLFMVIGGFTTTIY. Residues 94 to 107 lie on the Extracellular side of the membrane; that stretch reads TSMHGYFVLGRLGC. A disulfide bridge connects residues cysteine 107 and cysteine 184. Residues 108–130 form a helical membrane-spanning segment; sequence NIEGFFATLGGMISLWSLAVLAI. Residues 131–133 carry the 'Ionic lock' involved in activated form stabilization motif; sequence ERW. Topologically, residues 131–149 are cytoplasmic; it reads ERWVVVCKPISNFRFGENH. The helical transmembrane segment at 150–170 threads the bilayer; it reads AIMGVSLTWAMALACTVPPLV. The Extracellular segment spans residues 171-199; it reads GWSRYIPEGMQCSCGIDYYTRAEGFNNES. N-linked (GlcNAc...) asparagine glycosylation occurs at asparagine 197. The helical transmembrane segment at 200 to 221 threads the bilayer; the sequence is FVLYMFFCHFTIPLTIIFFCYG. The Cytoplasmic segment spans residues 222–249; that stretch reads RLLCAVKEAAAAQQESETTQRAEREVTR. A helical transmembrane segment spans residues 250–271; that stretch reads MVIIMVIGFLICWLPYASVAWF. Topologically, residues 272-283 are extracellular; it reads IFTHQGSEFGPL. The helical transmembrane segment at 284-305 threads the bilayer; that stretch reads FMTIPAFFAKSSSIYNPMIYIC. Lysine 293 bears the N6-(retinylidene)lysine mark. Topologically, residues 306–348 are cytoplasmic; sequence MNKQFRHCMITTLFCGKNPFEGEEEGASSTKTEASSASSVSPA. Cysteine 320 carries S-palmitoyl cysteine lipidation. The interval 327 to 348 is disordered; that stretch reads GEEEGASSTKTEASSASSVSPA. Positions 332–348 are enriched in low complexity; sequence ASSTKTEASSASSVSPA.

This sequence belongs to the G-protein coupled receptor 1 family. Opsin subfamily. Post-translationally, phosphorylated on some or all of the serine and threonine residues present in the C-terminal region. Contains one covalently linked retinal chromophore.

The protein resides in the membrane. It localises to the cell projection. It is found in the cilium. Its subcellular location is the photoreceptor outer segment. Photoreceptor required for image-forming vision at low light intensity. While most salt water fish species use retinal as chromophore, most freshwater fish use 3-dehydroretinal, or a mixture of retinal and 3-dehydroretinal. Light-induced isomerization of 11-cis to all-trans retinal triggers a conformational change that activates signaling via G-proteins. Subsequent receptor phosphorylation mediates displacement of the bound G-protein alpha subunit by arrestin and terminates signaling. The polypeptide is Rhodopsin (rho) (Sargocentron microstoma (Smallmouth squirrelfish)).